The following is a 291-amino-acid chain: Formamidopyrimidine-DNA glycosylase (291 aa).

P2 functions as the Schiff-base intermediate with DNA in the catalytic mechanism. Catalysis depends on E3, which acts as the Proton donor. The active-site Proton donor; for beta-elimination activity is the K58. 3 residues coordinate DNA: H104, R123, and K166. An FPG-type zinc finger spans residues 257 to 291; sequence KVYDREGEPCPTCGGTVQRFVQNGRSTFWCPKCQK. The active-site Proton donor; for delta-elimination activity is the R281.

It belongs to the FPG family. In terms of assembly, monomer. The cofactor is Zn(2+).

The enzyme catalyses Hydrolysis of DNA containing ring-opened 7-methylguanine residues, releasing 2,6-diamino-4-hydroxy-5-(N-methyl)formamidopyrimidine.. It carries out the reaction 2'-deoxyribonucleotide-(2'-deoxyribose 5'-phosphate)-2'-deoxyribonucleotide-DNA = a 3'-end 2'-deoxyribonucleotide-(2,3-dehydro-2,3-deoxyribose 5'-phosphate)-DNA + a 5'-end 5'-phospho-2'-deoxyribonucleoside-DNA + H(+). In terms of biological role, involved in base excision repair of DNA damaged by oxidation or by mutagenic agents. Acts as a DNA glycosylase that recognizes and removes damaged bases. Has a preference for oxidized purines, such as 7,8-dihydro-8-oxoguanine (8-oxoG). Has AP (apurinic/apyrimidinic) lyase activity and introduces nicks in the DNA strand. Cleaves the DNA backbone by beta-delta elimination to generate a single-strand break at the site of the removed base with both 3'- and 5'-phosphates. This chain is Formamidopyrimidine-DNA glycosylase, found in Rhodopseudomonas palustris (strain ATCC BAA-98 / CGA009).